A 537-amino-acid polypeptide reads, in one-letter code: Extracellular exo-inulinase inuE (537 aa).

Positions 1 to 19 (MARLLKAVTVCALAGIAHA) are cleaved as a signal peptide. D41 is a catalytic residue. N-linked (GlcNAc...) asparagine glycosylation is found at N49, N67, N112, N300, N363, N398, N430, and N531.

Belongs to the glycosyl hydrolase 32 family.

It is found in the secreted. The enzyme catalyses Hydrolysis of terminal, non-reducing (2-&gt;1)- and (2-&gt;6)-linked beta-D-fructofuranose residues in fructans.. In terms of biological role, exo-inulinase involved in utilization of the plant storage polymer inulin, consisting of fructooligosaccharides with a degree of polymerization (DP) value from 2 to 60. Splits off terminal fructose units successively from the non-reducing end of the inulin molecule, and also hydrolyze sucrose and raffinose. This is Extracellular exo-inulinase inuE (inuE) from Aspergillus niger (strain ATCC MYA-4892 / CBS 513.88 / FGSC A1513).